The primary structure comprises 566 residues: MSKISRQAYAEIFGPTTGDRLRLADTELFIEIEKDFTTYGEEVKFGGGKVIRDGMGQSQRNYKDVMDTVITNAVIVEHWGIVKADIGLKGGKIAGIGKAGNPDIQPDVTMAIGGATEIIAGEGMIVTAGGVDTHIHFICPQQIEEALMSGVTTMIGGGTGPAVGTAATTCTPGPWHIHSMLSAADAFPMNLGFLGKGNVSLPTPLEEQIHAGAIGLKLHEDWGSTPAAIDNCLSVADRLDVQVAIHSDTLNEGGFLEHTLAAFKDRTIHTFHTEGAGGGHAPDIIAAVGQANVLPSSTNPTRPFTVNTLDEHLDMLMVCHHLDPAIAEDVAFAESRIRRETIAAEDILHDIGAISMMSSDSQAMGRVGEVIMRTWQTAHKMKVQRGSLAGDPARNDNFRVKRYIAKYTINPAITHGISHVVGSLEVGKVADIVLWKPAFFGVKPSMILKSGMIAAAQMGDPNASIPTPQPVHYRMMFGAYGGGLKTSMTFVSQSAFDAGIGDMLKLNKPVVAVKNMRHLRKRDMIHNSATPKMEVDSETYEVRADGELLVCEPAKILPLAQRYFLF.

One can recognise a Urease domain in the interval 129-566 (GGVDTHIHFI…LPLAQRYFLF (438 aa)). Ni(2+) contacts are provided by histidine 134, histidine 136, and lysine 217. Position 217 is an N6-carboxylysine (lysine 217). Histidine 219 contributes to the substrate binding site. Histidine 246 and histidine 272 together coordinate Ni(2+). The active-site Proton donor is the histidine 320. Aspartate 360 is a binding site for Ni(2+).

It belongs to the metallo-dependent hydrolases superfamily. Urease alpha subunit family. Heterotrimer of UreA (gamma), UreB (beta) and UreC (alpha) subunits. Three heterotrimers associate to form the active enzyme. Ni cation is required as a cofactor. Carboxylation allows a single lysine to coordinate two nickel ions.

The protein resides in the cytoplasm. It catalyses the reaction urea + 2 H2O + H(+) = hydrogencarbonate + 2 NH4(+). The protein operates within nitrogen metabolism; urea degradation; CO(2) and NH(3) from urea (urease route): step 1/1. This is Urease subunit alpha from Janthinobacterium sp. (strain Marseille) (Minibacterium massiliensis).